A 540-amino-acid polypeptide reads, in one-letter code: Zinc finger CCCH domain-containing protein 46 (540 aa).

The segment at glycine 148–glycine 175 adopts a C3H1-type zinc-finger fold. In terms of domain architecture, RRM spans arginine 258–lysine 334. Basic and acidic residues-rich tracts occupy residues valine 337 to leucine 351 and glutamate 436 to glycine 450. 3 disordered regions span residues valine 337 to glycine 365, glutamate 436 to serine 469, and serine 490 to serine 514. The residue at position 451 (serine 451) is a Phosphoserine. The span at serine 490–serine 511 shows a compositional bias: low complexity.

Functionally, possesses RNA-binding and ribonuclease activities in vitro. In Arabidopsis thaliana (Mouse-ear cress), this protein is Zinc finger CCCH domain-containing protein 46.